A 288-amino-acid polypeptide reads, in one-letter code: Co-chaperone protein DjlA (288 aa).

At 1-6 (MNFIGK) the chain is on the periplasmic side. A helical transmembrane segment spans residues 7–30 (ILGFIIGYRFGGLFGGIAGLILGH). The Cytoplasmic segment spans residues 31 to 288 (IADKKLYELG…DLICKVKGWK (258 aa)). One can recognise a J domain in the interval 222–288 (DAYKVLGVNA…DLICKVKGWK (67 aa)).

In terms of assembly, homodimer.

It localises to the cell inner membrane. Functionally, regulatory DnaK co-chaperone. Direct interaction between DnaK and DjlA is needed for the induction of the wcaABCDE operon, involved in the synthesis of a colanic acid polysaccharide capsule, possibly through activation of the RcsB/RcsC phosphotransfer signaling pathway. The colanic acid capsule may help the bacterium survive conditions outside the host. In Mannheimia succiniciproducens (strain KCTC 0769BP / MBEL55E), this protein is Co-chaperone protein DjlA.